Consider the following 327-residue polypeptide: Lipoyl synthase (327 aa).

Cysteine 72, cysteine 77, cysteine 83, cysteine 98, cysteine 102, cysteine 105, and serine 313 together coordinate [4Fe-4S] cluster. The Radical SAM core domain occupies 83–302 (CWSHGTATIM…RRVGLEKGFL (220 aa)).

Belongs to the radical SAM superfamily. Lipoyl synthase family. Requires [4Fe-4S] cluster as cofactor.

It is found in the cytoplasm. It carries out the reaction [[Fe-S] cluster scaffold protein carrying a second [4Fe-4S](2+) cluster] + N(6)-octanoyl-L-lysyl-[protein] + 2 oxidized [2Fe-2S]-[ferredoxin] + 2 S-adenosyl-L-methionine + 4 H(+) = [[Fe-S] cluster scaffold protein] + N(6)-[(R)-dihydrolipoyl]-L-lysyl-[protein] + 4 Fe(3+) + 2 hydrogen sulfide + 2 5'-deoxyadenosine + 2 L-methionine + 2 reduced [2Fe-2S]-[ferredoxin]. Its pathway is protein modification; protein lipoylation via endogenous pathway; protein N(6)-(lipoyl)lysine from octanoyl-[acyl-carrier-protein]: step 2/2. In terms of biological role, catalyzes the radical-mediated insertion of two sulfur atoms into the C-6 and C-8 positions of the octanoyl moiety bound to the lipoyl domains of lipoate-dependent enzymes, thereby converting the octanoylated domains into lipoylated derivatives. The protein is Lipoyl synthase of Francisella philomiragia subsp. philomiragia (strain ATCC 25017 / CCUG 19701 / FSC 153 / O#319-036).